The following is a 985-amino-acid chain: MSEQERVQECLRKEIRSLLISTKDGLTPQQLEKEYLLMVGNHLPLRILGYRSTMELVLDMPDVVTVSPCGDGTIILRAIPDESTKGIANLVAKQRSSHKVRNSMQKGRPSVCSGSSSRRRVPYRGRVPPILPAVVKSELKDLLALSPVLLSDFEKAFARRFGRSFQYVQYGFLSMFEVLNAASDVISVEQTRAGSLLMLKRSISEEKQRGWPAVTKGGKMFTQPFRMKQQGSYSTGSPVAKACFSQPTSNMEPPKQILNAEKTFKSNVVETSRLNHTEKLNQLENTFKSVISQIGPGGTINPELKHKLRFVVSKFPEGLLISKLLREFEIMFKEQLSPKQLGFLNVTELVGALSDILRVEFREGEQDLLVFDANMKPLASVQSDKKIDVKACVSSPPRNSLSTAAVKETAWDCLPKNHREPEQKICKKPNLVVKPLQLQVGVNKSELNLAMANHDIPPDAVRDKKLCRLPPLDTSTLVGVFVEYIISPSQFYIRIYSRDSSELLEDMMIEMRRCYSNQLVSDRYAMPEYFIQPGHLCCVRISEDKWWYRVIIHRVLGKQEVEVFYPDFGNIGTVQKSSLRFLKWCYTKLPAQAIPCSLAWVRPVEEHWTSRAIIQFQKLCGLKPLVGVVDEYVDGILNIFLCDTSSNEDVYFHHVLRTEGHAIVCRENVPSKGFRELNPLALYTKSSAGPEDVVLTELGCPSQQHYFNEDREISPQSKENELPTLDEIPIGMPCLESVTIGDDVWDENWLPLQAKMGKGGDAPSHLFTSSRGGKKPYLSCKEMPQKDWCFSAPKDMWDDSWQPSSLVNGMKVEVQKQEELSAQEKNIGTTRSQKQPNLESSSDSPTLPKLEEFYISLVESQQSAEGSQFEPSSIQTQVKQMQLSTAALSTTPAAVDSPEKHSGSVESSPESLKNDFSSSHAITVFKDKSHGAMDQLSLILSPEHQISQKLYIPRSTATAALGAAARLATSRRLLHWYPSVKRMEA.

An HTH OST-type 1 domain is found at 7 to 80 (VQECLRKEIR…DGTIILRAIP (74 aa)). Residues 98 to 119 (HKVRNSMQKGRPSVCSGSSSRR) form a disordered region. Low complexity predominate over residues 107–116 (GRPSVCSGSS). HTH OST-type domains are found at residues 127 to 202 (VPPI…LKRS) and 300 to 374 (INPE…FDAN). The region spanning 530-589 (FIQPGHLCCVRISEDKWWYRVIIHRVLGKQEVEVFYPDFGNIGTVQKSSLRFLKWCYTKL) is the Tudor domain. 2 disordered regions span residues 818–846 (EELSAQEKNIGTTRSQKQPNLESSSDSPT) and 889–915 (STTPAAVDSPEKHSGSVESSPESLKND). Polar residues predominate over residues 823-845 (QEKNIGTTRSQKQPNLESSSDSP). Phosphoserine is present on Ser-897. Residues 904-915 (SVESSPESLKND) are compositionally biased toward polar residues.

Belongs to the TDRD5 family.

The protein localises to the cytoplasm. Its function is as follows. Required during spermiogenesis to participate in the repression transposable elements and prevent their mobilization, which is essential for the germline integrity. Probably acts via the piRNA metabolic process, which mediates the repression of transposable elements during meiosis by forming complexes composed of piRNAs and Piwi proteins and govern the methylation and subsequent repression of transposons. Required for chromatoid body (CB) assembly. The polypeptide is Tudor domain-containing protein 5 (TDRD5) (Canis lupus familiaris (Dog)).